A 251-amino-acid chain; its full sequence is 7-cyano-7-deazaguanine synthase (251 aa).

A disordered region spans residues 1 to 21; that stretch reads MSDLPRHSPRRQHAGESAVTA. Residue 35–45 coordinates ATP; the sequence is YSGGMDSYTVL. Residues cysteine 212, cysteine 220, cysteine 223, and cysteine 226 each coordinate Zn(2+).

It belongs to the QueC family. It depends on Zn(2+) as a cofactor.

It catalyses the reaction 7-carboxy-7-deazaguanine + NH4(+) + ATP = 7-cyano-7-deazaguanine + ADP + phosphate + H2O + H(+). It participates in purine metabolism; 7-cyano-7-deazaguanine biosynthesis. Its function is as follows. Catalyzes the ATP-dependent conversion of 7-carboxy-7-deazaguanine (CDG) to 7-cyano-7-deazaguanine (preQ(0)). This is 7-cyano-7-deazaguanine synthase from Chromohalobacter salexigens (strain ATCC BAA-138 / DSM 3043 / CIP 106854 / NCIMB 13768 / 1H11).